The primary structure comprises 259 residues: Peroxisomal membrane protein 11B (259 aa).

Lysine 43 bears the N6-acetyllysine mark. Residues 211–259 (VVRNACDLFIPLDKLGLWRCGPGIVGLCGLVSSILSILTLIYPWLRLKP) form an interaction with PEX19, PEX11G and FIS1 and peroxisome targeting region. The helical transmembrane segment at 234 to 254 (IVGLCGLVSSILSILTLIYPW) threads the bilayer.

The protein belongs to the peroxin-11 family. As to quaternary structure, homodimer. Heterodimer with PEX11G. Interacts with PEX19. Interacts with FIS1.

It localises to the peroxisome membrane. In terms of biological role, involved in peroxisomal proliferation. May regulate peroxisome division by recruiting the dynamin-related GTPase DNM1L to the peroxisomal membrane. Promotes membrane protrusion and elongation on the peroxisomal surface. The sequence is that of Peroxisomal membrane protein 11B (PEX11B) from Pongo abelii (Sumatran orangutan).